Here is a 34-residue protein sequence, read N- to C-terminus: Conotoxin Cl6d (34 aa).

Disulfide bonds link C4–C19, C12–C29, and C18–C33. 2 positions are modified to 4-hydroxyproline: P14 and P21.

Expressed by the venom duct.

Its subcellular location is the secreted. This is Conotoxin Cl6d from Californiconus californicus (California cone).